We begin with the raw amino-acid sequence, 304 residues long: Recombination-associated protein RdgC (304 aa).

The protein belongs to the RdgC family.

It is found in the cytoplasm. The protein resides in the nucleoid. Its function is as follows. May be involved in recombination. The protein is Recombination-associated protein RdgC of Shewanella putrefaciens (strain CN-32 / ATCC BAA-453).